A 1801-amino-acid chain; its full sequence is Focadhesin (1801 aa).

Lys-819 is modified (N6-acetyllysine).

As to quaternary structure, interacts with VCL. In terms of tissue distribution, ubiquitous. High expression in brain followed by testis, muscle, pancreas, heart, ovary, small intestine, placenta, prostate, thymus, kidney, colon, liver, lung, spleen and leukocytes. Expression is reduced in most glioblastomas and all glioblastoma cell lines.

The protein localises to the cell junction. It is found in the focal adhesion. Its subcellular location is the cytoplasm. The protein resides in the cytosol. Functionally, required for the maintenance of SKIC2 and SKIC3 proteostatic levels in the liver. May be involved in the regulation of RNA degradation by the exosome complex. Potential tumor suppressor in gliomas. The polypeptide is Focadhesin (Homo sapiens (Human)).